Reading from the N-terminus, the 93-residue chain is Phosphoribosyl-ATP pyrophosphatase (93 aa).

This sequence belongs to the PRA-PH family.

The protein resides in the cytoplasm. It catalyses the reaction 1-(5-phospho-beta-D-ribosyl)-ATP + H2O = 1-(5-phospho-beta-D-ribosyl)-5'-AMP + diphosphate + H(+). The protein operates within amino-acid biosynthesis; L-histidine biosynthesis; L-histidine from 5-phospho-alpha-D-ribose 1-diphosphate: step 2/9. The sequence is that of Phosphoribosyl-ATP pyrophosphatase from Mycobacterium sp. (strain JLS).